Consider the following 404-residue polypeptide: Cysteine desulfurase IscS (404 aa).

Pyridoxal 5'-phosphate contacts are provided by residues 75 to 76, Asn155, Gln183, and 203 to 205; these read AT and SAH. Lys206 bears the N6-(pyridoxal phosphate)lysine mark. Residue Thr243 coordinates pyridoxal 5'-phosphate. The active-site Cysteine persulfide intermediate is Cys328. Residue Cys328 participates in [2Fe-2S] cluster binding.

It belongs to the class-V pyridoxal-phosphate-dependent aminotransferase family. NifS/IscS subfamily. As to quaternary structure, homodimer. Forms a heterotetramer with IscU, interacts with other sulfur acceptors. Pyridoxal 5'-phosphate serves as cofactor.

Its subcellular location is the cytoplasm. The enzyme catalyses (sulfur carrier)-H + L-cysteine = (sulfur carrier)-SH + L-alanine. It participates in cofactor biosynthesis; iron-sulfur cluster biosynthesis. In terms of biological role, master enzyme that delivers sulfur to a number of partners involved in Fe-S cluster assembly, tRNA modification or cofactor biosynthesis. Catalyzes the removal of elemental sulfur atoms from cysteine to produce alanine. Functions as a sulfur delivery protein for Fe-S cluster synthesis onto IscU, an Fe-S scaffold assembly protein, as well as other S acceptor proteins. In Pseudomonas putida (strain W619), this protein is Cysteine desulfurase IscS.